A 326-amino-acid chain; its full sequence is Transcription factor WRKY45-1 (326 aa).

Disordered stretches follow at residues glycine 67–valine 114 and glycine 252–aspartate 288. A DNA-binding region (WRKY) is located at residues valine 112 to proline 180. Positions arginine 273–glycine 283 are enriched in gly residues.

Belongs to the WRKY group III family. In terms of tissue distribution, expressed in aleurone cells.

It localises to the nucleus. In terms of biological role, transcriptional activator involved in defense responses against pathogens. Acts as a positive regulator of defense responses against the rice blast fungus Magnaporthe oryzae. Acts through W-boxes, which are cis-elements that are enriched in the promoters of several defense-related genes. Plays an important role in the benzothiadiazole-induced disease resistance by mediating salicylic acid (SA) defense signaling pathway, independently of the disease resistance gene NPR1/NH1. Acts as a negative regulator of defense responses against the bacterial blight Xanthomonas oryzae pv oryzae (Xoo) and the bacterial streak Xanthomonas oryzae pv oryzicola (Xoc). Acts downstream of abscisic acid (ABA) signaling in response to the rice blast fungus. ABA is a negative regulator of defense responses that interacts antagonistically with salicylic acid (SA) signaling pathway. Acts as a negative regulator of ABA signaling that suppresses growth of seedlings. Does not seem to be involved in the regulation of salt stress response. Acts as a negative regulator of cold stress response. Acts as a negative regulator of drought stress response. This Oryza sativa subsp. japonica (Rice) protein is Transcription factor WRKY45-1.